The primary structure comprises 207 residues: Small ribosomal subunit protein uS4 (207 aa).

An S4 RNA-binding domain is found at 97–160 (SRLDNVVYRM…KKQARIVEAL (64 aa)).

The protein belongs to the universal ribosomal protein uS4 family. As to quaternary structure, part of the 30S ribosomal subunit. Contacts protein S5. The interaction surface between S4 and S5 is involved in control of translational fidelity.

Functionally, one of the primary rRNA binding proteins, it binds directly to 16S rRNA where it nucleates assembly of the body of the 30S subunit. With S5 and S12 plays an important role in translational accuracy. The sequence is that of Small ribosomal subunit protein uS4 from Burkholderia pseudomallei (strain 1106a).